The chain runs to 293 residues: Diaminopimelate epimerase (293 aa).

Residues N13, Q46, and N66 each coordinate substrate. The active-site Proton donor is C75. Substrate-binding positions include 76-77, N162, N195, and 213-214; these read GN and ER. C222 functions as the Proton acceptor in the catalytic mechanism. 223–224 provides a ligand contact to substrate; sequence GT.

This sequence belongs to the diaminopimelate epimerase family. As to quaternary structure, homodimer.

It localises to the cytoplasm. The catalysed reaction is (2S,6S)-2,6-diaminopimelate = meso-2,6-diaminopimelate. Its pathway is amino-acid biosynthesis; L-lysine biosynthesis via DAP pathway; DL-2,6-diaminopimelate from LL-2,6-diaminopimelate: step 1/1. Functionally, catalyzes the stereoinversion of LL-2,6-diaminopimelate (L,L-DAP) to meso-diaminopimelate (meso-DAP), a precursor of L-lysine and an essential component of the bacterial peptidoglycan. This Psychrobacter sp. (strain PRwf-1) protein is Diaminopimelate epimerase.